We begin with the raw amino-acid sequence, 356 residues long: Peptide-N(4)-(N-acetyl-beta-glucosaminyl)asparagine amidase (356 aa).

4 residues coordinate Zn(2+): Cys129, Cys132, Cys163, and Cys166. Catalysis depends on Cys189, which acts as the Nucleophile. Residues His216 and Asp233 contribute to the active site. Glu236 contributes to the substrate binding site. The disordered stretch occupies residues 300–356 (IRQNLSPSEKEELKREDEAEERELASYNADEPQEAQMPRQSGSVEWTKARGEGGSDD). Composition is skewed to basic and acidic residues over residues 307-316 (SEKEELKRED) and 346-356 (TKARGEGGSDD).

Belongs to the transglutaminase-like superfamily. PNGase family. It depends on Zn(2+) as a cofactor.

It is found in the cytoplasm. The catalysed reaction is Hydrolysis of an N(4)-(acetyl-beta-D-glucosaminyl)asparagine residue in which the glucosamine residue may be further glycosylated, to yield a (substituted) N-acetyl-beta-D-glucosaminylamine and a peptide containing an aspartate residue.. Functionally, specifically deglycosylates the denatured form of N-linked glycoproteins in the cytoplasm and assists their proteasome-mediated degradation. Cleaves the beta-aspartyl-glucosamine (GlcNAc) of the glycan and the amide side chain of Asn, converting Asn to Asp. Prefers proteins containing high-mannose over those bearing complex type oligosaccharides. Can recognize misfolded proteins in the endoplasmic reticulum that are exported to the cytosol to be destroyed and deglycosylate them, while it has no activity toward native proteins. Deglycosylation is a prerequisite for subsequent proteasome-mediated degradation of some, but not all, misfolded glycoproteins. This Yarrowia lipolytica (strain CLIB 122 / E 150) (Yeast) protein is Peptide-N(4)-(N-acetyl-beta-glucosaminyl)asparagine amidase (PNG1).